We begin with the raw amino-acid sequence, 959 residues long: Xylosyltransferase 1 (959 aa).

The Cytoplasmic portion of the chain corresponds to 1 to 17; the sequence is MVAAPCARRLARRSHSA. Residues 18-38 form a helical; Signal-anchor for type II membrane protein membrane-spanning segment; it reads LLAALTVLLLQTLVVWNFSSL. Residues 39–959 lie on the Lumenal side of the membrane; sequence DSGAGERRGG…GAVKPDGRLR (921 aa). Positions 42–259 are disordered; the sequence is AGERRGGAAV…KYDQPPKCDI (218 aa). The span at 78–104 shows a compositional bias: gly residues; the sequence is RGGGGGGGGGGGGRGPQARARGGGPGE. The segment covering 145 to 161 has biased composition (basic and acidic residues); the sequence is KVRTDSNNENSVPKDFE. A compositionally biased stretch (polar residues) spans 163–172; it reads VDNSNFAPRT. Residues 177–204 show a composition bias toward basic and acidic residues; sequence HQPELAKKPPSRQKELLKRKLEQQEKGK. N-linked (GlcNAc...) asparagine glycosylation is present at Asn-226. Over residues 249–259 the composition is skewed to basic and acidic residues; sequence TKYDQPPKCDI. Cystine bridges form between Cys-257–Cys-285, Cys-301–Cys-542, Cys-561–Cys-574, and Cys-563–Cys-572. Residues Val-333, Asp-361, and 390 to 392 each bind UDP-alpha-D-xylose; that span reads TIW. Asn-421 carries an N-linked (GlcNAc...) asparagine glycan. 494-495 contributes to the UDP-alpha-D-xylose binding site; that stretch reads DW. Residues Ser-575 and 598-599 contribute to the UDP-alpha-D-xylose site; that span reads RK. 2 cysteine pairs are disulfide-bonded: Cys-675–Cys-927 and Cys-920–Cys-933. N-linked (GlcNAc...) asparagine glycosylation occurs at Asn-777. The segment at 940–959 is disordered; that stretch reads SFSPDPKSELGAVKPDGRLR.

This sequence belongs to the glycosyltransferase 14 family. XylT subfamily. As to quaternary structure, monomer. The cofactor is a divalent metal cation. Contains 7 disulfide bonds. Post-translationally, N-glycosylated. Widely expressed. Expressed at higher level in placenta, kidney and pancreas. Weakly expressed in skeletal muscle.

The protein resides in the golgi apparatus membrane. Its subcellular location is the secreted. It catalyses the reaction UDP-alpha-D-xylose + L-seryl-[protein] = 3-O-(beta-D-xylosyl)-L-seryl-[protein] + UDP + H(+). It functions in the pathway glycan metabolism; chondroitin sulfate biosynthesis. It participates in glycan metabolism; heparan sulfate biosynthesis. Its function is as follows. Catalyzes the first step in the biosynthesis of chondroitin sulfate and dermatan sulfate proteoglycans, such as DCN. Transfers D-xylose from UDP-D-xylose to specific serine residues of the core protein. Required for normal embryonic and postnatal skeleton development, especially of the long bones. Required for normal maturation of chondrocytes during bone development, and normal onset of ossification. This is Xylosyltransferase 1 (XYLT1) from Homo sapiens (Human).